A 394-amino-acid chain; its full sequence is S-adenosylmethionine synthase (394 aa).

His18 serves as a coordination point for ATP. Mg(2+) is bound at residue Asp20. Glu46 contributes to the K(+) binding site. The L-methionine site is built by Glu59 and Gln102. The flexible loop stretch occupies residues 102-112; the sequence is QSPDIDMGVSA. Residues 175–177, Asp250, 256–257, Ala273, and Lys277 contribute to the ATP site; these read DGK and RK. Asp250 lines the L-methionine pocket. An L-methionine-binding site is contributed by Lys281.

It belongs to the AdoMet synthase family. Homotetramer; dimer of dimers. Requires Mg(2+) as cofactor. K(+) is required as a cofactor.

The protein resides in the cytoplasm. The catalysed reaction is L-methionine + ATP + H2O = S-adenosyl-L-methionine + phosphate + diphosphate. It functions in the pathway amino-acid biosynthesis; S-adenosyl-L-methionine biosynthesis; S-adenosyl-L-methionine from L-methionine: step 1/1. Catalyzes the formation of S-adenosylmethionine (AdoMet) from methionine and ATP. The overall synthetic reaction is composed of two sequential steps, AdoMet formation and the subsequent tripolyphosphate hydrolysis which occurs prior to release of AdoMet from the enzyme. This chain is S-adenosylmethionine synthase, found in Brachyspira hyodysenteriae (strain ATCC 49526 / WA1).